A 257-amino-acid chain; its full sequence is tRNA pseudouridine synthase A (257 aa).

The Nucleophile role is filled by D57. Y115 is a binding site for substrate.

This sequence belongs to the tRNA pseudouridine synthase TruA family. Homodimer.

The enzyme catalyses uridine(38/39/40) in tRNA = pseudouridine(38/39/40) in tRNA. Its function is as follows. Formation of pseudouridine at positions 38, 39 and 40 in the anticodon stem and loop of transfer RNAs. The sequence is that of tRNA pseudouridine synthase A from Lawsonia intracellularis (strain PHE/MN1-00).